Here is a 349-residue protein sequence, read N- to C-terminus: Merozoite surface protein P38 (349 aa).

The first 21 residues, 1–21 (MKRWSIITGIVIIFCILTCKG), serve as a signal peptide directing secretion. 6-Cys domains follow at residues 22 to 149 (QVEN…ISNG) and 153 to 301 (KIPG…YLTN). 4 disulfides stabilise this stretch: cysteine 77/cysteine 127, cysteine 157/cysteine 183, cysteine 197/cysteine 278, and cysteine 208/cysteine 276. N-linked (GlcNAc...) asparagine glycosylation is found at asparagine 294, asparagine 295, and asparagine 301. Asparagine 315 is lipidated: GPI-anchor amidated asparagine. Positions 316–349 (SEIFERIEREEISFAFSSYLSITLILLYLFFLNF) are cleaved as a propeptide — removed in mature form.

The protein resides in the cell surface. The protein localises to the cell membrane. This chain is Merozoite surface protein P38 (PFS38), found in Plasmodium falciparum (isolate 3D7).